Here is a 60-residue protein sequence, read N- to C-terminus: Metallothionein (60 aa).

Residues 1–28 (MDPCECSKTGKCSCGGSCTCTNCSCTSC) are beta. A divalent metal cation-binding residues include C4, C6, C12, C14, C18, C20, C23, C25, C28, C32, C33, C35, C36, C40, C43, C47, C49, C54, C58, and C59. Residues 29–60 (KKSCCPCCPSGCSKCASGCVCKGKTCDTSCCQ) are alpha.

Belongs to the metallothionein superfamily. Type 1 family.

In terms of biological role, metallothioneins have a high content of cysteine residues that bind various heavy metals. The chain is Metallothionein (mt) from Chelon auratus (Golden grey mullet).